Reading from the N-terminus, the 600-residue chain is MAIKQLSETLINQIAAGEVIERPASAAKELIENALDAGATRIEVATAGGGKTLLRVTDNGNGMSPADLELAIRRHCTSKIDDTLTDIRTLGFRGEALPSIGSVARLSITTRTAGAREGAAISVIGGKTESVRPSPANVGTVVEVRDLFFATPARLKFMKTEKAEAAAISEVVRRMAIAFPKVRFVVSGSDRSTLEFPATGDDRLARMAQVLGKDFRDNAIGIDAEREEARLSGFAGVPTFNRGNSLQQYAFVNGRPVQDKLILSAIRAAYAETIPQGRYPVAVLSIALDPALVDVNVHPAKSDVRFRDPGLIRGLIIGAIREALSRGGDRAATTGAQGMMRSFRPEAYRAEPHRAQAPWTAATSPYRPMRFDEPARGFAEAPQAAFQEFAQPAARPAETAPNGTVEPAFPLGAARAQLHENYIVAQTEEGLVIVDQHAAHERLVFEAMRTALHSRPVPAQALLIPEIVDLAEDDCDRLMAHAEEFLRLGLSIERFGPGAIAVRETPAMLGEMDASGLVRQLADELAEWDTANGLAGRLDYLAATMACHGSVRSGRRMRPEEMNALLRQMEATPGSGQCNHGRPTYIELKLADIERLFGRS.

It belongs to the DNA mismatch repair MutL/HexB family.

Its function is as follows. This protein is involved in the repair of mismatches in DNA. It is required for dam-dependent methyl-directed DNA mismatch repair. May act as a 'molecular matchmaker', a protein that promotes the formation of a stable complex between two or more DNA-binding proteins in an ATP-dependent manner without itself being part of a final effector complex. The chain is DNA mismatch repair protein MutL from Sinorhizobium fredii (strain NBRC 101917 / NGR234).